Here is a 1082-residue protein sequence, read N- to C-terminus: CRISPR-associated endonuclease Cas9 (1082 aa).

Asp-16 (for RuvC-like nuclease domain) is an active-site residue. The Mg(2+) site is built by Asp-16, Glu-504, and Glu-508. The HNH Cas9-type domain occupies 512 to 667 (SFKDRKEIEK…DEDGFKERNL (156 aa)). The active-site Proton acceptor for HNH nuclease domain is the His-588. Position 723 (His-723) interacts with Mg(2+).

Belongs to the CRISPR-associated protein Cas9 family. Subtype II-C subfamily. Monomer. Binds crRNA and tracrRNA. Mg(2+) is required as a cofactor.

Functionally, CRISPR (clustered regularly interspaced short palindromic repeat) is an adaptive immune system that provides protection against mobile genetic elements (viruses, transposable elements and conjugative plasmids). CRISPR clusters contain spacers, sequences complementary to antecedent mobile elements, and target invading nucleic acids. CRISPR clusters are transcribed and processed into CRISPR RNA (crRNA). In type II CRISPR systems correct processing of pre-crRNA requires a trans-encoded small RNA (tracrRNA), endogenous ribonuclease 3 (rnc) and this protein. The tracrRNA serves as a guide for ribonuclease 3-aided processing of pre-crRNA. Subsequently Cas9/crRNA/tracrRNA endonucleolytically cleaves linear or circular dsDNA target complementary to the spacer; Cas9 is inactive in the absence of the 2 guide RNAs (gRNA). Cas9 recognizes the protospacer adjacent motif (PAM) in the CRISPR repeat sequences to help distinguish self versus nonself, as targets within the bacterial CRISPR locus do not have PAMs. PAM recognition is also required for catalytic activity. Cuts target DNA in Cas9:gRNAs mixing experiments with C.jejuni strain NCTC 11168 and P.multocoda strain Pm70. This is CRISPR-associated endonuclease Cas9 from Neisseria meningitidis serogroup A / serotype 4A (strain DSM 15465 / Z2491).